A 141-amino-acid chain; its full sequence is Hemoglobin subunit alpha-A/Q/R/T (141 aa).

The region spanning 1-141 (VLSPADKTNV…VSTVLTSKYR (141 aa)) is the Globin domain. Position 3 is a phosphoserine (Ser-3). Lys-7 is subject to N6-succinyllysine. Residue Thr-8 is modified to Phosphothreonine. An N6-succinyllysine modification is found at Lys-11. The residue at position 16 (Lys-16) is an N6-acetyllysine; alternate. An N6-succinyllysine; alternate modification is found at Lys-16. Tyr-24 is modified (phosphotyrosine). Ser-35 is modified (phosphoserine). Lys-40 is subject to N6-succinyllysine. Ser-49 is modified (phosphoserine). O2 is bound at residue His-58. Residue His-87 coordinates heme b. A Phosphoserine modification is found at Ser-102. At Thr-108 the chain carries Phosphothreonine. Residues Ser-124 and Ser-131 each carry the phosphoserine modification. Residues Thr-134 and Thr-137 each carry the phosphothreonine modification. Ser-138 carries the phosphoserine modification.

It belongs to the globin family. In terms of assembly, heterotetramer of two alpha chains and two beta chains. Red blood cells.

In terms of biological role, involved in oxygen transport from the lung to the various peripheral tissues. This Macaca fascicularis (Crab-eating macaque) protein is Hemoglobin subunit alpha-A/Q/R/T.